Reading from the N-terminus, the 496-residue chain is Probable G-protein coupled receptor Mth-like 5 (496 aa).

Residues 1–219 are Extracellular-facing; that stretch reads MLVKTLGAHF…SNFLLRKILN (219 aa). Asn-82 carries N-linked (GlcNAc...) asparagine glycosylation. A helical membrane pass occupies residues 220 to 240; sequence PIFHGISLVILLVIAIIYFIL. At 241 to 246 the chain is on the cytoplasmic side; the sequence is PTLRDL. Residues 247 to 267 traverse the membrane as a helical segment; sequence VGNIVTTIAMCLMVSQAADLV. At 268-276 the chain is on the extracellular side; that stretch reads RIFTELTSH. A helical membrane pass occupies residues 277-297; that stretch reads VSFIVADIILCFSLLAAFFWL. Over 298-327 the chain is Cytoplasmic; that stretch reads NSFGFYIWKTFRSRNVFLRVTDGRKYCYYS. The helical transmembrane segment at 328 to 348 threads the bilayer; it reads AYAWGCTATMAALAVFAHFFL. Topologically, residues 349–366 are extracellular; sequence DAESYKQEHMVGEQETIG. The helical transmembrane segment at 367-387 threads the bilayer; the sequence is WLGICIFFAPIACTILVNIFF. At 388-411 the chain is on the cytoplasmic side; that stretch reads YVTTRKLINRRTVYGRIAHKLKAN. A helical membrane pass occupies residues 412 to 432; sequence FIMFSLMLLVMSIAWLFLIMS. Over 433–438 the chain is Extracellular; sequence WLQMEG. A helical membrane pass occupies residues 439–459; that stretch reads LLYAHIVVNALQTPLLLYICV. At 460–496 the chain is on the cytoplasmic side; that stretch reads LRQRHVTFLLKKTCCYNEPPSANDWGDELHYMNGNDY.

This sequence belongs to the G-protein coupled receptor 2 family. Mth subfamily.

The protein resides in the cell membrane. In Drosophila melanogaster (Fruit fly), this protein is Probable G-protein coupled receptor Mth-like 5 (mthl5).